We begin with the raw amino-acid sequence, 265 residues long: ATP synthase subunit a (265 aa).

5 helical membrane passes run 25–45 (FWAV…LFLW), 88–108 (IAPL…MDLI), 142–162 (DLNT…IYSI), 207–227 (LFGN…IGFW), and 233–253 (FAWA…FMML).

It belongs to the ATPase A chain family. In terms of assembly, F-type ATPases have 2 components, CF(1) - the catalytic core - and CF(0) - the membrane proton channel. CF(1) has five subunits: alpha(3), beta(3), gamma(1), delta(1), epsilon(1). CF(0) has three main subunits: a(1), b(2) and c(9-12). The alpha and beta chains form an alternating ring which encloses part of the gamma chain. CF(1) is attached to CF(0) by a central stalk formed by the gamma and epsilon chains, while a peripheral stalk is formed by the delta and b chains.

It is found in the cell inner membrane. Key component of the proton channel; it plays a direct role in the translocation of protons across the membrane. The protein is ATP synthase subunit a of Idiomarina loihiensis (strain ATCC BAA-735 / DSM 15497 / L2-TR).